Reading from the N-terminus, the 229-residue chain is 5'-methylthioadenosine/S-adenosylhomocysteine nucleosidase (229 aa).

Glu-12 (proton acceptor) is an active-site residue. Substrate is bound by residues Gly-78, Ile-152, and 173-174 (ME). Asp-197 serves as the catalytic Proton donor.

The protein belongs to the PNP/UDP phosphorylase family. MtnN subfamily.

It catalyses the reaction S-adenosyl-L-homocysteine + H2O = S-(5-deoxy-D-ribos-5-yl)-L-homocysteine + adenine. The enzyme catalyses S-methyl-5'-thioadenosine + H2O = 5-(methylsulfanyl)-D-ribose + adenine. The catalysed reaction is 5'-deoxyadenosine + H2O = 5-deoxy-D-ribose + adenine. Its pathway is amino-acid biosynthesis; L-methionine biosynthesis via salvage pathway; S-methyl-5-thio-alpha-D-ribose 1-phosphate from S-methyl-5'-thioadenosine (hydrolase route): step 1/2. Functionally, catalyzes the irreversible cleavage of the glycosidic bond in both 5'-methylthioadenosine (MTA) and S-adenosylhomocysteine (SAH/AdoHcy) to adenine and the corresponding thioribose, 5'-methylthioribose and S-ribosylhomocysteine, respectively. Also cleaves 5'-deoxyadenosine, a toxic by-product of radical S-adenosylmethionine (SAM) enzymes, into 5-deoxyribose and adenine. The chain is 5'-methylthioadenosine/S-adenosylhomocysteine nucleosidase from Histophilus somni (strain 129Pt) (Haemophilus somnus).